Consider the following 481-residue polypeptide: Phosphoglucosamine mutase (481 aa).

Serine 129 serves as the catalytic Phosphoserine intermediate. Positions 129, 271, 273, and 275 each coordinate Mg(2+). Phosphoserine is present on serine 129.

It belongs to the phosphohexose mutase family. The cofactor is Mg(2+). Post-translationally, activated by phosphorylation.

It catalyses the reaction alpha-D-glucosamine 1-phosphate = D-glucosamine 6-phosphate. Its function is as follows. Catalyzes the conversion of glucosamine-6-phosphate to glucosamine-1-phosphate. In Picosynechococcus sp. (strain ATCC 27264 / PCC 7002 / PR-6) (Agmenellum quadruplicatum), this protein is Phosphoglucosamine mutase.